Reading from the N-terminus, the 571-residue chain is Urease subunit alpha (571 aa).

In terms of domain architecture, Urease spans 132 to 571; sequence GAIDTHIHFI…LPMGQKYFLF (440 aa). Residues His-137, His-139, and Lys-220 each contribute to the Ni(2+) site. Residue Lys-220 is modified to N6-carboxylysine. His-222 contributes to the substrate binding site. Positions 249 and 275 each coordinate Ni(2+). His-323 acts as the Proton donor in catalysis. Asp-363 is a binding site for Ni(2+).

The protein belongs to the metallo-dependent hydrolases superfamily. Urease alpha subunit family. In terms of assembly, heterotrimer of UreA (gamma), UreB (beta) and UreC (alpha) subunits. Three heterotrimers associate to form the active enzyme. Ni cation is required as a cofactor. Post-translationally, carboxylation allows a single lysine to coordinate two nickel ions.

The protein resides in the cytoplasm. The catalysed reaction is urea + 2 H2O + H(+) = hydrogencarbonate + 2 NH4(+). It participates in nitrogen metabolism; urea degradation; CO(2) and NH(3) from urea (urease route): step 1/1. The sequence is that of Urease subunit alpha from Corynebacterium urealyticum (strain ATCC 43042 / DSM 7109).